Here is a 393-residue protein sequence, read N- to C-terminus: Putative N(4)-(beta-N-acetylglucosaminyl)-L-asparaginase CG1827 (393 aa).

The first 23 residues, 1 to 23 (MRRHLRASLWILCLATMAFSILA), serve as a signal peptide directing secretion. N-linked (GlcNAc...) asparagine glycans are attached at residues Asn49 and Asn64. 2 disulfide bridges follow: Cys97–Cys102 and Cys196–Cys212. Thr243 serves as the catalytic Nucleophile. Residues 271–274 (RVGD) and 294–297 (TGDG) contribute to the substrate site. A disulfide bridge connects residues Cys354 and Cys381.

Belongs to the Ntn-hydrolase family. Heterotetramer of two alpha and two beta chains arranged as a dimer of alpha/beta heterodimers. Post-translationally, cleaved into an alpha and beta chain by autocatalysis; this activates the enzyme. The N-terminal residue of the beta subunit is responsible for the nucleophile hydrolase activity.

It catalyses the reaction N(4)-(beta-N-acetyl-D-glucosaminyl)-L-asparagine + H2O = N-acetyl-beta-D-glucosaminylamine + L-aspartate + H(+). Cleaves the GlcNAc-Asn bond which joins oligosaccharides to the peptide of asparagine-linked glycoproteins. This chain is Putative N(4)-(beta-N-acetylglucosaminyl)-L-asparaginase CG1827, found in Drosophila melanogaster (Fruit fly).